The following is a 114-amino-acid chain: Neurotrophic factor BDNF precursor form (114 aa).

3 disulfide bridges follow: cysteine 14/cysteine 81, cysteine 59/cysteine 110, and cysteine 69/cysteine 112.

This sequence belongs to the NGF-beta family.

Its subcellular location is the secreted. In terms of biological role, promotes the survival of neuronal populations that are all located either in the central nervous system or directly connected to it. This Xenopus laevis (African clawed frog) protein is Neurotrophic factor BDNF precursor form (bdnf).